Reading from the N-terminus, the 320-residue chain is tRNA(Ile)-lysidine synthase, chloroplastic (320 aa).

31–36 is an ATP binding site; that stretch reads SGGKDS.

It belongs to the tRNA(Ile)-lysidine synthase family.

The protein localises to the plastid. It localises to the chloroplast. It catalyses the reaction cytidine(34) in tRNA(Ile2) + L-lysine + ATP = lysidine(34) in tRNA(Ile2) + AMP + diphosphate + H(+). In terms of biological role, ligates lysine onto the cytidine present at position 34 of the AUA codon-specific tRNA(Ile) that contains the anticodon CAU, in an ATP-dependent manner. Cytidine is converted to lysidine, thus changing the amino acid specificity of the tRNA from methionine to isoleucine. This chain is tRNA(Ile)-lysidine synthase, chloroplastic, found in Gracilaria tenuistipitata var. liui (Red alga).